Consider the following 887-residue polypeptide: Pyruvate dehydrogenase E1 component (887 aa).

In terms of assembly, homodimer. Part of the PDH complex, consisting of multiple copies of pyruvate dehydrogenase (E1), dihydrolipoamide acetyltransferase (E2) and lipoamide dehydrogenase (E3). Thiamine diphosphate is required as a cofactor.

It catalyses the reaction N(6)-[(R)-lipoyl]-L-lysyl-[protein] + pyruvate + H(+) = N(6)-[(R)-S(8)-acetyldihydrolipoyl]-L-lysyl-[protein] + CO2. Functionally, component of the pyruvate dehydrogenase (PDH) complex, that catalyzes the overall conversion of pyruvate to acetyl-CoA and CO(2). This chain is Pyruvate dehydrogenase E1 component (aceE), found in Buchnera aphidicola subsp. Baizongia pistaciae (strain Bp).